The chain runs to 136 residues: Translation initiation factor 5A (136 aa).

Hypusine is present on lysine 38.

Belongs to the eIF-5A family.

The protein resides in the cytoplasm. Its function is as follows. Functions by promoting the formation of the first peptide bond. This chain is Translation initiation factor 5A, found in Methanopyrus kandleri (strain AV19 / DSM 6324 / JCM 9639 / NBRC 100938).